A 404-amino-acid polypeptide reads, in one-letter code: Tyrosine--tRNA ligase (404 aa).

The 'HIGH' region motif lies at 45–54; it reads PTAPDLHLGH. The 'KMSKS' region motif lies at 229 to 233; it reads KMSKS. Residue lysine 232 participates in ATP binding. One can recognise an S4 RNA-binding domain in the interval 342–402; it reads IFIASIVRLA…GKKAIAQVTF (61 aa).

It belongs to the class-I aminoacyl-tRNA synthetase family. TyrS type 2 subfamily. As to quaternary structure, homodimer.

It localises to the cytoplasm. It carries out the reaction tRNA(Tyr) + L-tyrosine + ATP = L-tyrosyl-tRNA(Tyr) + AMP + diphosphate + H(+). In terms of biological role, catalyzes the attachment of tyrosine to tRNA(Tyr) in a two-step reaction: tyrosine is first activated by ATP to form Tyr-AMP and then transferred to the acceptor end of tRNA(Tyr). This Acinetobacter baylyi (strain ATCC 33305 / BD413 / ADP1) protein is Tyrosine--tRNA ligase.